The primary structure comprises 89 residues: MSITAERKQELIKKFAIKEGDTGSPEVQVAILTERINNLTDHFKTNKKDNHSRRGLLTMVATRRKLLDYARSKSEARYTKLITELGIRR.

Belongs to the universal ribosomal protein uS15 family. Part of the 30S ribosomal subunit. Forms a bridge to the 50S subunit in the 70S ribosome, contacting the 23S rRNA.

Its function is as follows. One of the primary rRNA binding proteins, it binds directly to 16S rRNA where it helps nucleate assembly of the platform of the 30S subunit by binding and bridging several RNA helices of the 16S rRNA. Functionally, forms an intersubunit bridge (bridge B4) with the 23S rRNA of the 50S subunit in the ribosome. In Hyphomonas neptunium (strain ATCC 15444), this protein is Small ribosomal subunit protein uS15.